Reading from the N-terminus, the 134-residue chain is Transmembrane protein 100 (134 aa).

2 helical membrane-spanning segments follow: residues 56 to 76 (CIIP…AVAY) and 84 to 104 (IISI…ASSA). Ser121 is subject to Phosphoserine.

As to quaternary structure, interacts (via C-terminus) with TRPA1 and TRPV1. Interacts with TASOR. Expressed in neurons of the myenteric and submucosal plexuses in the gastric body, jejunum and proximal colon. Expressed in arterial endothelial cells and neurons of the central nervous system and peripheral nervous system. Expressed in umbilical artery endothelial cells (at protein level).

It is found in the cell membrane. The protein resides in the membrane. It localises to the perikaryon. The protein localises to the cytoplasm. Its subcellular location is the perinuclear region. It is found in the endoplasmic reticulum. Plays a role during embryonic arterial endothelium differentiation and vascular morphogenesis through the ACVRL1 receptor-dependent signaling pathway upon stimulation by bone morphogenetic proteins, such as GDF2/BMP9 and BMP10. Involved in the regulation of nociception, acting as a modulator of the interaction between TRPA1 and TRPV1, two molecular sensors and mediators of pain signals in dorsal root ganglia (DRG) neurons. Mechanistically, it weakens their interaction, thereby releasing the inhibition of TRPA1 by TRPV1 and increasing the single-channel open probability of the TRPA1-TRPV1 complex. In Homo sapiens (Human), this protein is Transmembrane protein 100 (TMEM100).